The sequence spans 378 residues: Chaperone protein DnaJ (378 aa).

In terms of domain architecture, J spans 3–67 (DYYDLLGVSK…QTRGRYDQFG (65 aa)). The CR-type zinc finger occupies 133 to 215 (GQEREIKIPH…CAGQGVRQVR (83 aa)). Cys146, Cys149, Cys163, Cys166, Cys189, Cys192, Cys203, and Cys206 together coordinate Zn(2+). 4 CXXCXGXG motif repeats span residues 146–153 (CDTCNGTG), 163–170 (CSTCGGVG), 189–196 (CPSCEGTG), and 203–210 (CPACAGQG).

The protein belongs to the DnaJ family. Homodimer. The cofactor is Zn(2+).

It is found in the cytoplasm. Functionally, participates actively in the response to hyperosmotic and heat shock by preventing the aggregation of stress-denatured proteins and by disaggregating proteins, also in an autonomous, DnaK-independent fashion. Unfolded proteins bind initially to DnaJ; upon interaction with the DnaJ-bound protein, DnaK hydrolyzes its bound ATP, resulting in the formation of a stable complex. GrpE releases ADP from DnaK; ATP binding to DnaK triggers the release of the substrate protein, thus completing the reaction cycle. Several rounds of ATP-dependent interactions between DnaJ, DnaK and GrpE are required for fully efficient folding. Also involved, together with DnaK and GrpE, in the DNA replication of plasmids through activation of initiation proteins. This is Chaperone protein DnaJ from Prochlorococcus marinus (strain MIT 9313).